The primary structure comprises 120 residues: MFLLYEYDFFWAFLIISILVPILAFLISGVLAPISKGPEKLSTYESGIEPMGDAWLQFRIRYYMFALVFVVFDVETVFLYPWAMSFDVLGVSVFIEAFIFVLILIIGLVYAWRKGALEWS.

3 helical membrane passes run Phe-9–Gly-29, Met-64–Met-84, and Val-88–Leu-108.

It belongs to the complex I subunit 3 family. As to quaternary structure, NDH is composed of at least 16 different subunits, 5 of which are encoded in the nucleus.

The protein localises to the plastid. It localises to the chloroplast thylakoid membrane. It catalyses the reaction a plastoquinone + NADH + (n+1) H(+)(in) = a plastoquinol + NAD(+) + n H(+)(out). The catalysed reaction is a plastoquinone + NADPH + (n+1) H(+)(in) = a plastoquinol + NADP(+) + n H(+)(out). Functionally, NDH shuttles electrons from NAD(P)H:plastoquinone, via FMN and iron-sulfur (Fe-S) centers, to quinones in the photosynthetic chain and possibly in a chloroplast respiratory chain. The immediate electron acceptor for the enzyme in this species is believed to be plastoquinone. Couples the redox reaction to proton translocation, and thus conserves the redox energy in a proton gradient. This Nicotiana tabacum (Common tobacco) protein is NAD(P)H-quinone oxidoreductase subunit 3, chloroplastic.